The primary structure comprises 319 residues: Acetyl esterase (319 aa).

Residues 91–93 carry the Involved in the stabilization of the negatively charged intermediate by the formation of the oxyanion hole motif; it reads HGG. Residues serine 165, aspartate 262, and histidine 292 contribute to the active site.

The protein belongs to the 'GDXG' lipolytic enzyme family. In terms of assembly, homodimer. Interacts with MalT and MelA.

The protein localises to the cytoplasm. Displays esterase activity towards short chain fatty esters (acyl chain length of up to 8 carbons). Able to hydrolyze triacetylglycerol (triacetin) and tributyrylglycerol (tributyrin), but not trioleylglycerol (triolein) or cholesterol oleate. Negatively regulates MalT activity by antagonizing maltotriose binding. Inhibits MelA galactosidase activity. This Escherichia coli O6:H1 (strain CFT073 / ATCC 700928 / UPEC) protein is Acetyl esterase.